A 208-amino-acid polypeptide reads, in one-letter code: Somatotropin-B (208 aa).

The signal sequence occupies residues 1–25 (MVPGSCSSFGLLVILSFQNVPDVGG). Histidine 44 lines the Zn(2+) pocket. Cysteine 77 and cysteine 181 are disulfide-bonded. Position 190 (glutamate 190) interacts with Zn(2+). Cysteine 198 and cysteine 206 are joined by a disulfide.

The protein belongs to the somatotropin/prolactin family.

It is found in the secreted. Functionally, growth hormone plays an important role in growth control. This chain is Somatotropin-B (gh-b), found in Xenopus laevis (African clawed frog).